A 199-amino-acid chain; its full sequence is MVRVVLATHNRNKALEFQQILGDAVPGLQIVGYDGPEPVEDGITFEQNALIKARAAAERTGMIALADDSGICVDAMGGAPGIFSARWAGRHGDAQANLRLLLDQLADLPDSSRAAHFTATLALVTPEGETTVVEGVWPGRIAREARGGHGHGYDPIFLPDGHDVTAAELGPEAKNAESHRARAFAAIVPVLRALSRPGN.

Substrate is bound at residue 8-13 (THNRNK). Asp-68 serves as the catalytic Proton acceptor. Asp-68 lines the Mg(2+) pocket. Substrate contacts are provided by residues Ser-69, 151–154 (HGYD), Lys-174, and 179–180 (HR).

The protein belongs to the HAM1 NTPase family. Homodimer. Mg(2+) serves as cofactor.

It catalyses the reaction XTP + H2O = XMP + diphosphate + H(+). The catalysed reaction is dITP + H2O = dIMP + diphosphate + H(+). It carries out the reaction ITP + H2O = IMP + diphosphate + H(+). Pyrophosphatase that catalyzes the hydrolysis of nucleoside triphosphates to their monophosphate derivatives, with a high preference for the non-canonical purine nucleotides XTP (xanthosine triphosphate), dITP (deoxyinosine triphosphate) and ITP. Seems to function as a house-cleaning enzyme that removes non-canonical purine nucleotides from the nucleotide pool, thus preventing their incorporation into DNA/RNA and avoiding chromosomal lesions. The sequence is that of dITP/XTP pyrophosphatase from Leifsonia xyli subsp. xyli (strain CTCB07).